We begin with the raw amino-acid sequence, 449 residues long: UDP-N-acetylmuramoylalanine--D-glutamate ligase (449 aa).

117-123 (GSNGKTT) lines the ATP pocket.

This sequence belongs to the MurCDEF family.

It localises to the cytoplasm. It carries out the reaction UDP-N-acetyl-alpha-D-muramoyl-L-alanine + D-glutamate + ATP = UDP-N-acetyl-alpha-D-muramoyl-L-alanyl-D-glutamate + ADP + phosphate + H(+). The protein operates within cell wall biogenesis; peptidoglycan biosynthesis. Functionally, cell wall formation. Catalyzes the addition of glutamate to the nucleotide precursor UDP-N-acetylmuramoyl-L-alanine (UMA). This Exiguobacterium sibiricum (strain DSM 17290 / CCUG 55495 / CIP 109462 / JCM 13490 / 255-15) protein is UDP-N-acetylmuramoylalanine--D-glutamate ligase.